Here is a 297-residue protein sequence, read N- to C-terminus: HTH-type transcriptional regulator ArgP (297 aa).

Residues Pro-4 to Thr-60 enclose the HTH lysR-type domain. A DNA-binding region (H-T-H motif) is located at residues Phe-21–Lys-40.

The protein belongs to the LysR transcriptional regulatory family. In terms of assembly, homodimer.

Controls the transcription of genes involved in arginine and lysine metabolism. This Enterobacter sp. (strain 638) protein is HTH-type transcriptional regulator ArgP.